A 311-amino-acid chain; its full sequence is Ribosomal RNA small subunit methyltransferase H 1 (311 aa).

Residues 33 to 35 (AGH), aspartate 53, phenylalanine 80, aspartate 101, and glutamine 108 each bind S-adenosyl-L-methionine.

Belongs to the methyltransferase superfamily. RsmH family.

The protein localises to the cytoplasm. The catalysed reaction is cytidine(1402) in 16S rRNA + S-adenosyl-L-methionine = N(4)-methylcytidine(1402) in 16S rRNA + S-adenosyl-L-homocysteine + H(+). In terms of biological role, specifically methylates the N4 position of cytidine in position 1402 (C1402) of 16S rRNA. In Alkaliphilus metalliredigens (strain QYMF), this protein is Ribosomal RNA small subunit methyltransferase H 1.